The following is a 476-amino-acid chain: RNA-binding protein 45 (476 aa).

The segment covering 1–14 (MDDAGGLGGSGGFR) has biased composition (gly residues). A disordered region spans residues 1-20 (MDDAGGLGGSGGFRPGVDSL). RRM domains follow at residues 26 to 106 (SRIF…IAQS) and 121 to 192 (TRIF…LAEP). Lys-34 is covalently cross-linked (Glycyl lysine isopeptide (Lys-Gly) (interchain with G-Cter in SUMO2)). The tract at residues 192-212 (PKNKVSGSPEQDDYSSGRQEA) is disordered. The span at 196–209 (VSGSPEQDDYSSGR) shows a compositional bias: polar residues. Ser-199 and Ser-464 each carry phosphoserine. In terms of domain architecture, RRM 3 spans 392–464 (ERLFVVFNPH…VRLKVMLADS (73 aa)).

It is found in the cytoplasm. The protein resides in the nucleus. RNA-binding protein with binding specificity for poly(C). May play an important role in neural development. This is RNA-binding protein 45 (Rbm45) from Mus musculus (Mouse).